Reading from the N-terminus, the 340-residue chain is DNA-directed RNA polymerase subunit alpha (340 aa).

Residues 1 to 226 (MLIAQRPSLT…ELFGLARELN (226 aa)) are alpha N-terminal domain (alpha-NTD). The alpha C-terminal domain (alpha-CTD) stretch occupies residues 243-340 (LAADLALPIE…DAGFVETEQY (98 aa)).

This sequence belongs to the RNA polymerase alpha chain family. In terms of assembly, homodimer. The RNAP catalytic core consists of 2 alpha, 1 beta, 1 beta' and 1 omega subunit. When a sigma factor is associated with the core the holoenzyme is formed, which can initiate transcription. In terms of processing, the last 19 amino acids in the C-terminal part are cleaved in the spore.

It carries out the reaction RNA(n) + a ribonucleoside 5'-triphosphate = RNA(n+1) + diphosphate. Functionally, DNA-dependent RNA polymerase catalyzes the transcription of DNA into RNA using the four ribonucleoside triphosphates as substrates. This chain is DNA-directed RNA polymerase subunit alpha, found in Streptomyces granaticolor.